Reading from the N-terminus, the 564-residue chain is Solute carrier family 22 member 21 (564 aa).

Residues 1–20 lie on the Cytoplasmic side of the membrane; it reads MLDYDEVTAFLGEWGTFQRL. The chain crosses the membrane as a helical span at residues 21–41; the sequence is IFFLLSASIIPNGFTGLSAVF. The Extracellular portion of the chain corresponds to 42 to 142; the sequence is LTAIPEHRCR…DLVCKDDWKA (101 aa). N-linked (GlcNAc...) asparagine glycans are attached at residues N57, N64, and N91. The helical transmembrane segment at 143–163 threads the bilayer; that stretch reads PLTTSFFYVGVLLGSFISGQL. Topologically, residues 164–172 are cytoplasmic; sequence SDRFGRKNI. Residues 173–193 traverse the membrane as a helical segment; that stretch reads LFLTMAMHTGFSFIQVFSVNF. The Extracellular segment spans residues 194–197; sequence EMFT. A helical transmembrane segment spans residues 198-218; it reads LLYTLVGMGHISNYVAAFVLG. ATP is bound at residue 218–225; that stretch reads GTEMLSKS. Over 219-232 the chain is Cytoplasmic; it reads TEMLSKSVRIIFAT. Residues 233–253 form a helical membrane-spanning segment; it reads LGVCIFFAFGFMVLPLFAYFI. Residues 254 to 257 lie on the Extracellular side of the membrane; it reads REWR. The chain crosses the membrane as a helical span at residues 258–278; it reads RLLLAITLPGVLCGALWWFIP. The Cytoplasmic segment spans residues 279 to 344; sequence ESPRWLISQG…YDLVRTPNIR (66 aa). A helical transmembrane segment spans residues 345–365; sequence ILTIMSIILWLTISVGYFGLS. At 366–376 the chain is on the extracellular side; sequence LDTPNLNGNIY. A helical transmembrane segment spans residues 377 to 397; the sequence is VNCFLLAAVEVPAYVLAWLLL. Residues 398–409 are Cytoplasmic-facing; that stretch reads QHVSRRYSMAGS. Residues 410–430 traverse the membrane as a helical segment; that stretch reads LFLGGSVLLLVQLVPSDLHYL. Topologically, residues 431-433 are extracellular; sequence STT. Residues 434–454 traverse the membrane as a helical segment; the sequence is LVMVGKFGITSAYSMVYVYTA. Residues 455–465 lie on the Cytoplasmic side of the membrane; sequence ELYPTVVRNMG. A helical membrane pass occupies residues 466–486; that stretch reads VGVSSTASRLGSILSPYFVYL. At 487 to 491 the chain is on the extracellular side; it reads GAYDR. The helical transmembrane segment at 492 to 512 threads the bilayer; that stretch reads RLPYILMGSLTILTAIITLFF. The Cytoplasmic portion of the chain corresponds to 513–564; sequence PESSGVSLPETIDEMQKVKKLKQRQSLSKKGSPKESKGNVSRTSRTSEPKGF. Positions 532–564 are disordered; that stretch reads KLKQRQSLSKKGSPKESKGNVSRTSRTSEPKGF.

Belongs to the major facilitator (TC 2.A.1) superfamily. Organic cation transporter (TC 2.A.1.19) family. Predominantly expressed in testis.

It localises to the peroxisome membrane. Sodium-ion independent, medium affinity carnitine transporter. Also transports organic cations such as tetraethylammonium (TEA) without the involvement of sodium. Relative uptake activity ratio of carnitine to TEA is 746. The protein is Solute carrier family 22 member 21 (Slc22a21) of Mus musculus (Mouse).